The primary structure comprises 144 residues: Large ribosomal subunit protein uL15 (144 aa).

Residues 1 to 54 (MRLNTLSPAEGSKKAGKRLGRGIGSGLGKTGGRGHKGQKSRSGGGVRRGFEGGQ) form a disordered region. The span at 21–31 (RGIGSGLGKTG) shows a compositional bias: gly residues.

The protein belongs to the universal ribosomal protein uL15 family. In terms of assembly, part of the 50S ribosomal subunit.

Its function is as follows. Binds to the 23S rRNA. This is Large ribosomal subunit protein uL15 from Escherichia coli (strain K12 / MC4100 / BW2952).